Here is a 370-residue protein sequence, read N- to C-terminus: Alpha-(1,3)-fucosyltransferase 7 (370 aa).

Residues 1 to 36 (MVQGCLCWRGCCDLKTSFPWVTNSRRLWMNCIGCNP) are Cytoplasmic-facing. The helical; Signal-anchor for type II membrane protein transmembrane segment at 37–59 (VWRLRAWGCLAGGTTLMVIWLFW) threads the bilayer. The Lumenal segment spans residues 60–370 (LLRSVPGGAP…YEDLESWFQA (311 aa)). A glycan (N-linked (GlcNAc...) asparagine) is linked at N86. C96 and C104 are oxidised to a cystine. The N-linked (GlcNAc...) asparagine glycan is linked to N109. Cysteines 239 and 242 form a disulfide. The N-linked (GlcNAc...) asparagine glycan is linked to N319. C346 and C349 are joined by a disulfide.

This sequence belongs to the glycosyltransferase 10 family. Post-translationally, N-glycosylated. Expressed in lymph node and kidney.

The protein localises to the golgi apparatus. It is found in the golgi stack membrane. The enzyme catalyses an N-acetyl-alpha-neuraminyl-(2-&gt;3)-beta-D-galactosyl-(1-&gt;4)-N-acetyl-beta-D-glucosaminyl derivative + GDP-beta-L-fucose = an alpha-Neu5Ac-(2-&gt;3)-beta-D-Gal-(1-&gt;4)-[alpha-L-Fuc-(1-&gt;3)]-beta-D-GlcNAc derivative + GDP + H(+). The catalysed reaction is a neolactoside IV(3)-alpha-NeuAc-nLc4Cer + GDP-beta-L-fucose = a neolactoside IV(3)-alpha-NeuNAc,III(3)-alpha-Fuc-nLc4Cer + GDP + H(+). It catalyses the reaction a neolactoside VI(3)-alpha-NeuNAc-nLc6Cer + GDP-beta-L-fucose = a neolactoside VI(3)-alpha-NeuAc,V(3)-alphaFuc-nLc6Cer + GDP + H(+). It carries out the reaction an alpha-Neu5Ac-(2-&gt;3)-beta-D-Gal-(1-&gt;4)-beta-D-GlcNAc-(1-&gt;3)-beta-D-Gal-(1-&gt;4)-[alpha-L-Fuc-(1-&gt;3)]-beta-D-GlcNAc derivative + GDP-beta-L-fucose = an alpha-Neu5Ac-(2-&gt;3)-beta-D-Gal-(1-&gt;4)-[alpha-L-Fuc-(1-&gt;3)]-beta-D-GlcNAc-(1-&gt;3)-beta-D-Gal-(1-&gt;4)-[alpha-L-Fuc-(1-&gt;3)]-beta-D-GlcNAc derivative + GDP + H(+). The enzyme catalyses an alpha-Neu5Ac-(2-&gt;3)-beta-D-Gal-(1-&gt;4)-beta-D-GlcNAc6S derivative + GDP-beta-L-fucose = an alpha-Neu5Ac-(2-&gt;3)-beta-D-Gal-(1-&gt;4)-[alpha-L-Fuc-(1-&gt;3)]-beta-D-GlcNAc6S derivative + GDP + H(+). The catalysed reaction is alpha-Neu5Ac-(2-&gt;3)-beta-D-Gal-(1-&gt;4)-beta-D-GlcNAc-(1-&gt;3)-beta-D-Gal-(1-&gt;4)-D-Glc + GDP-beta-L-fucose = alpha-Neu5Ac-(2-&gt;3)-beta-D-Gal-(1-&gt;4)-[alpha-L-Fuc-(1-&gt;3)]-beta-D-GlcNAc-(1-&gt;3)-beta-D-Gal-(1-&gt;4)-D-Glc + GDP + H(+). It catalyses the reaction alpha-Neu5Ac-(2-&gt;3)-beta-D-Gal-(1-&gt;4)-beta-D-GlcNAc-(1-&gt;3)-beta-D-Gal-(1-&gt;4)-[alpha-L-Fuc-(1-&gt;3)]-beta-D-GlcNAc-(1-&gt;3)-beta-D-Gal-(1-&gt;4)-beta-D-GlcNAc + GDP-beta-L-fucose = alpha-Neu5Ac-(2-&gt;3)-beta-D-Gal-(1-&gt;4)-[alpha-L-Fuc-(1-&gt;3)]-beta-D-GlcNAc-(1-&gt;3)-beta-D-Gal-(1-&gt;4)-[alpha-L-Fuc-(1-&gt;3)]-beta-D-GlcNAc-(1-&gt;3)-beta-D-Gal-(1-&gt;4)-beta-D-GlcNAc + GDP + H(+). It carries out the reaction alpha-Neu5Ac-(2-&gt;3)-beta-D-Gal-(1-&gt;4)-beta-D-GlcNAc-(1-&gt;3)-beta-D-Gal-(1-&gt;4)-beta-D-GlcNAc-(1-&gt;3)-beta-D-Gal-(1-&gt;4)-beta-D-GlcNAc + GDP-beta-L-fucose = alpha-Neu5Ac-(2-&gt;3)-beta-D-Gal-(1-&gt;4)-[alpha-L-Fuc-(1-&gt;3)]-beta-D-GlcNAc-(1-&gt;3)-beta-D-Gal-(1-&gt;4)-beta-D-GlcNAc-(1-&gt;3)-beta-D-Gal-(1-&gt;4)-beta-D-GlcNAc + GDP + H(+). The protein operates within protein modification; protein glycosylation. With respect to regulation, inhibited by NaCl. Inhibited by GDP in a concentration dependent manner, with an IC(50) value of 93 uM. Also inhibited by GMP and GTP. Inhibited by N-ethylmaleimide. Activated by poly(ethylene glycol) by enhancing the thermal stability of FUT7. Activated by Mn2+, Ca2+, and Mg2+. Both panosialin A and B inhibit activity with IC(50) values of 4.8 and 5.3 ug/ml, respectively. Inhibited by gallic acid (GA) and (-)-epigallocatechin gallate (EGCG) in a time-dependent and irreversible manner with IC(50) values of 60 and 700 nM, respectively. Catalyzes the transfer of L-fucose, from a guanosine diphosphate-beta-L-fucose, to the N-acetyl glucosamine (GlcNAc) of a distal alpha2,3 sialylated lactosamine unit of a glycoprotein or a glycolipid-linked sialopolylactosamines chain through an alpha-1,3 glycosidic linkage and participates in the final fucosylation step in the biosynthesis of the sialyl Lewis X (sLe(x)), a carbohydrate involved in cell and matrix adhesion during leukocyte trafficking and fertilization. In vitro, also synthesizes sialyl-dimeric-Lex structures, from VIM-2 structures and both di-fucosylated and trifucosylated structures from mono-fucosylated precursors. However does not catalyze alpha 1-3 fucosylation when an internal alpha 1-3 fucosylation is present in polylactosamine chain and the fucosylation rate of the internal GlcNAc residues is reduced once fucose has been added to the distal GlcNAc. Also catalyzes the transfer of a fucose from GDP-beta-fucose to the 6-sulfated a(2,3)sialylated substrate to produce 6-sulfo sLex mediating significant L-selectin-dependent cell adhesion. Through sialyl-Lewis(x) biosynthesis, can control SELE- and SELP-mediated cell adhesion with leukocytes and allows leukocytes tethering and rolling along the endothelial tissue thereby enabling the leukocytes to accumulate at a site of inflammation. May enhance embryo implantation through sialyl Lewis X (sLeX)-mediated adhesion of embryo cells to endometrium. May affect insulin signaling by up-regulating the phosphorylation and expression of some signaling molecules involved in the insulin-signaling pathway through SLe(x) which is present on the glycans of the INSRR alpha subunit. In Rattus norvegicus (Rat), this protein is Alpha-(1,3)-fucosyltransferase 7.